The sequence spans 134 residues: MWHLRCSNWRGSGVFGMCFSLSGCVMGQWCVSRAIVRGHTQGGAVREVVRELLLGPQHHGYARLVDPAVRPLSCFSRGDTLYIDLPVGVLSPKYRTCSLHRAYELXERSVVLNCAPVKRVCFYVGGRAGFESDG.

A signal peptide spans 1 to 23 (MWHLRCSNWRGSGVFGMCFSLSG). Cysteine 24 is lipidated: N-palmitoyl cysteine. Residue cysteine 24 is the site of S-diacylglycerol cysteine attachment.

The protein localises to the cell membrane. This is an uncharacterized protein from Treponema pallidum (strain Nichols).